Reading from the N-terminus, the 70-residue chain is Protein SlyX homolog (70 aa).

The protein belongs to the SlyX family.

This Shewanella sediminis (strain HAW-EB3) protein is Protein SlyX homolog.